Reading from the N-terminus, the 555-residue chain is Energy-dependent translational throttle protein EttA (555 aa).

ABC transporter domains are found at residues 6–259 (YTMH…AQEA) and 324–550 (LEVS…RIKY). 39 to 46 (GLNGAGKS) provides a ligand contact to ATP. Residues 95-139 (SEVVNALKRLDEVYALYADPDADFDKLAAEQGRLEEIIQAHDGHN) are arm. Positions 242–322 (GNYSSWLEQK…IPPGPRLGDK (81 aa)) are ptIM. 356–363 (GPNGAGKS) contacts ATP.

This sequence belongs to the ABC transporter superfamily. ABCF family. Translational throttle EttA subfamily. As to quaternary structure, monomer. Probably contacts ribosomal proteins L1, L5, L33 and S7, the 16S and 23S rRNA and the P-site containing tRNA(fMet).

The protein localises to the cytoplasm. It carries out the reaction ATP + H2O = ADP + phosphate + H(+). A translation factor that gates the progression of the 70S ribosomal initiation complex (IC, containing tRNA(fMet) in the P-site) into the translation elongation cycle by using a mechanism sensitive to the ATP/ADP ratio. Binds to the 70S ribosome E-site where it modulates the state of the translating ribosome during subunit translocation. ATP hydrolysis probably frees it from the ribosome, which can enter the elongation phase. In Escherichia coli O6:H1 (strain CFT073 / ATCC 700928 / UPEC), this protein is Energy-dependent translational throttle protein EttA.